Consider the following 246-residue polypeptide: tRNA pseudouridine synthase A (246 aa).

Asp52 (nucleophile) is an active-site residue. Tyr111 serves as a coordination point for substrate.

The protein belongs to the tRNA pseudouridine synthase TruA family. Homodimer.

The enzyme catalyses uridine(38/39/40) in tRNA = pseudouridine(38/39/40) in tRNA. In terms of biological role, formation of pseudouridine at positions 38, 39 and 40 in the anticodon stem and loop of transfer RNAs. The sequence is that of tRNA pseudouridine synthase A from Ehrlichia ruminantium (strain Gardel).